Reading from the N-terminus, the 156-residue chain is Small ribosomal subunit protein uS7 (156 aa).

Belongs to the universal ribosomal protein uS7 family. In terms of assembly, part of the 30S ribosomal subunit. Contacts proteins S9 and S11.

Functionally, one of the primary rRNA binding proteins, it binds directly to 16S rRNA where it nucleates assembly of the head domain of the 30S subunit. Is located at the subunit interface close to the decoding center, probably blocks exit of the E-site tRNA. The sequence is that of Small ribosomal subunit protein uS7 from Gloeobacter violaceus (strain ATCC 29082 / PCC 7421).